We begin with the raw amino-acid sequence, 95 residues long: Small ribosomal subunit protein bS6 (95 aa).

This sequence belongs to the bacterial ribosomal protein bS6 family.

Binds together with bS18 to 16S ribosomal RNA. The protein is Small ribosomal subunit protein bS6 of Corynebacterium diphtheriae (strain ATCC 700971 / NCTC 13129 / Biotype gravis).